The sequence spans 130 residues: Protein AUXIN-REGULATED GENE INVOLVED IN ORGAN SIZE (130 aa).

Residues 65-116 (FSLESLFLLVGLTASLLILPLVLPPLPPPPFMLLLVPIGIMVLLVVLAFMPS) form an organ Size Related (OSR) domain region. 2 helical membrane passes run 70–90 (LFLL…LPPL) and 94–114 (PFML…LAFM).

It belongs to the plant organ size related (OSR) protein family. As to expression, mostly expressed in flowers, inflorescence stems, leaf primordia and young leaves, and, to a lower extent, in siliques, cotyledon vascular bundles, roots (pericycle and root tips) and mature leaves.

It is found in the membrane. The protein localises to the nucleus. It localises to the cytoplasm. Its subcellular location is the endoplasmic reticulum. In terms of biological role, promotes cell proliferation-dependent organ growth. Takes part in the AXR1-dependent auxin signaling pathway that requires ANT during organogenesis. This Arabidopsis thaliana (Mouse-ear cress) protein is Protein AUXIN-REGULATED GENE INVOLVED IN ORGAN SIZE (ARGOS).